The primary structure comprises 283 residues: 5'-nucleotidase SurE (283 aa).

A divalent metal cation contacts are provided by Asp-14, Asp-15, Ser-47, and Asn-105.

This sequence belongs to the SurE nucleotidase family. Requires a divalent metal cation as cofactor.

The protein resides in the cytoplasm. It catalyses the reaction a ribonucleoside 5'-phosphate + H2O = a ribonucleoside + phosphate. Its function is as follows. Nucleotidase that shows phosphatase activity on nucleoside 5'-monophosphates. The chain is 5'-nucleotidase SurE from Chlamydia trachomatis serovar L2 (strain ATCC VR-902B / DSM 19102 / 434/Bu).